We begin with the raw amino-acid sequence, 159 residues long: ATP synthase subunit b', chloroplastic (159 aa).

The helical transmembrane segment at 30–47 (LMALQFLALTIILNLIYY) threads the bilayer.

The protein belongs to the ATPase B chain family. As to quaternary structure, F-type ATPases have 2 components, F(1) - the catalytic core - and F(0) - the membrane proton channel. F(1) has five subunits: alpha(3), beta(3), gamma(1), delta(1), epsilon(1). F(0) has four main subunits: a(1), b(1), b'(1) and c(10-14). The alpha and beta chains form an alternating ring which encloses part of the gamma chain. F(1) is attached to F(0) by a central stalk formed by the gamma and epsilon chains, while a peripheral stalk is formed by the delta, b and b' chains.

The protein localises to the plastid. Its subcellular location is the chloroplast thylakoid membrane. Its function is as follows. F(1)F(0) ATP synthase produces ATP from ADP in the presence of a proton or sodium gradient. F-type ATPases consist of two structural domains, F(1) containing the extramembraneous catalytic core and F(0) containing the membrane proton channel, linked together by a central stalk and a peripheral stalk. During catalysis, ATP synthesis in the catalytic domain of F(1) is coupled via a rotary mechanism of the central stalk subunits to proton translocation. Functionally, component of the F(0) channel, it forms part of the peripheral stalk, linking F(1) to F(0). The b'-subunit is a diverged and duplicated form of b found in plants and photosynthetic bacteria. The sequence is that of ATP synthase subunit b', chloroplastic from Antithamnion sp. (Red alga).